The chain runs to 245 residues: Probable 2-phosphosulfolactate phosphatase (245 aa).

The protein belongs to the ComB family. Requires Mg(2+) as cofactor.

It catalyses the reaction (2R)-O-phospho-3-sulfolactate + H2O = (2R)-3-sulfolactate + phosphate. This is Probable 2-phosphosulfolactate phosphatase from Synechococcus sp. (strain RCC307).